We begin with the raw amino-acid sequence, 487 residues long: CUGBP Elav-like family member 1 (487 aa).

Methionine 1 is subject to N-acetylmethionine. Threonine 4 carries the post-translational modification Phosphothreonine. RRM domains are found at residues 16–99 (IKMF…PADS) and 108–188 (RKLF…FADT). A Glycyl lysine isopeptide (Lys-Gly) (interchain with G-Cter in SUMO2) cross-link involves residue lysine 109. Phosphoserine is present on residues serine 179 and serine 303. Residues 277–310 (TPSGTNALTTSSSPLSVLTSSAGSSPSSSSSNSV) form a disordered region. Over residues 283-310 (ALTTSSSPLSVLTSSAGSSPSSSSSNSV) the composition is skewed to low complexity. The RRM 3 domain occupies 402–480 (ANLFIYHLPQ…KRLKVQLKRS (79 aa)).

This sequence belongs to the CELF/BRUNOL family. In terms of assembly, interacts with HNRNPH1; the interaction in RNA-dependent. Interacts with PARN. Component of an EIF2 complex at least composed of CELF1/CUGBP1, CALR, CALR3, EIF2S1, EIF2S2, HSP90B1 and HSPA5. Associates with polysomes.

The protein resides in the nucleus. Its subcellular location is the cytoplasm. In terms of biological role, RNA-binding protein implicated in the regulation of several post-transcriptional events. Involved in pre-mRNA alternative splicing, mRNA translation and stability. Mediates exon inclusion and/or exclusion in pre-mRNA that are subject to tissue-specific and developmentally regulated alternative splicing. Specifically activates exon 5 inclusion of cardiac isoforms of TNNT2 during heart remodeling at the juvenile to adult transition. Acts both as an activator and as a repressor of a pair of coregulated exons: promotes inclusion of the smooth muscle (SM) exon but exclusion of the non-muscle (NM) exon in actinin pre-mRNAs. Activates SM exon 5 inclusion by antagonizing the repressive effect of PTB. Promotes exclusion of exon 11 of the INSR pre-mRNA. Inhibits, together with HNRNPH1, insulin receptor (IR) pre-mRNA exon 11 inclusion in myoblast. Increases translation and controls the choice of translation initiation codon of CEBPB mRNA. Increases mRNA translation of CEBPB in aging liver. Increases translation of CDKN1A mRNA by antagonizing the repressive effect of CALR3. Mediates rapid cytoplasmic mRNA deadenylation. Recruits the deadenylase PARN to the poly(A) tail of EDEN-containing mRNAs to promote their deadenylation. Required for completion of spermatogenesis. Binds to (CUG)n triplet repeats in the 3'-UTR of transcripts such as DMPK and to Bruno response elements (BREs). Binds to muscle-specific splicing enhancer (MSE) intronic sites flanking the alternative exon 5 of TNNT2 pre-mRNA. Binds to AU-rich sequences (AREs or EDEN-like) localized in the 3'-UTR of JUN and FOS mRNAs. Binds to the IR RNA. Binds to the 5'-region of CDKN1A and CEBPB mRNAs. Binds with the 5'-region of CEBPB mRNA in aging liver. May be a specific regulator of miRNA biogenesis. Binds to primary microRNA pri-MIR140 and, with CELF2, negatively regulates the processing to mature miRNA. The polypeptide is CUGBP Elav-like family member 1 (Celf1) (Rattus norvegicus (Rat)).